Consider the following 295-residue polypeptide: Ribosomal protein L11 methyltransferase (295 aa).

Residues threonine 146, glycine 167, aspartate 189, and asparagine 231 each contribute to the S-adenosyl-L-methionine site.

This sequence belongs to the methyltransferase superfamily. PrmA family.

The protein localises to the cytoplasm. It carries out the reaction L-lysyl-[protein] + 3 S-adenosyl-L-methionine = N(6),N(6),N(6)-trimethyl-L-lysyl-[protein] + 3 S-adenosyl-L-homocysteine + 3 H(+). Methylates ribosomal protein L11. The sequence is that of Ribosomal protein L11 methyltransferase from Vibrio vulnificus (strain YJ016).